Consider the following 469-residue polypeptide: uncharacterized protein (469 aa).

A disordered region spans residues 203–244 (ACPVPPQGHASSAADQAGVPERGRKRAHEGPGAGEAASAGRG).

This sequence belongs to the epstein-barr virus LF1 family.

This is an uncharacterized protein from Homo sapiens (Human).